The chain runs to 416 residues: Glutamyl-tRNA reductase (416 aa).

Substrate is bound by residues 46 to 49 (TCNR), serine 97, 102 to 104 (DHE), and glutamine 108. Cysteine 47 serves as the catalytic Nucleophile. 178–183 (GAGMAA) contributes to the NADP(+) binding site.

Belongs to the glutamyl-tRNA reductase family. In terms of assembly, homodimer.

The catalysed reaction is (S)-4-amino-5-oxopentanoate + tRNA(Glu) + NADP(+) = L-glutamyl-tRNA(Glu) + NADPH + H(+). The protein operates within porphyrin-containing compound metabolism; protoporphyrin-IX biosynthesis; 5-aminolevulinate from L-glutamyl-tRNA(Glu): step 1/2. Functionally, catalyzes the NADPH-dependent reduction of glutamyl-tRNA(Glu) to glutamate 1-semialdehyde (GSA). The sequence is that of Glutamyl-tRNA reductase from Aeropyrum pernix (strain ATCC 700893 / DSM 11879 / JCM 9820 / NBRC 100138 / K1).